The following is a 1479-amino-acid chain: ESX secretion system protein EccC (1479 aa).

At 1-235 (MSQLWVLYET…SQEGDGDPRG (235 aa)) the chain is on the cytoplasmic side. Residues 236–256 (LWLMVLPPVMMLLVIGAVALI) form a helical membrane-spanning segment. Topologically, residues 257–259 (QPR) are extracellular. The chain crosses the membrane as a helical span at residues 260 to 280 (GVFIMISIAMFATTIVTSTAQ). At 281 to 1479 (YMREKKARQM…DQKIQIPKVE (1199 aa)) the chain is on the cytoplasmic side. The stretch at 291-321 (RKEKRRRIYTNYLEQKREELQALSEKQRNVL) forms a coiled coil. 2 FtsK domains span residues 652 to 848 (NDVV…NDSK) and 984 to 1168 (QSDY…SEKF). 672–679 (GTTGSGKS) lines the ATP pocket. Residue Glu-785 is part of the active site. Residues 1004 to 1009 (GYGKST), Asn-1036, Asp-1105, Ile-1197, Asp-1206, 1287 to 1291 (RKGKT), and Ile-1475 each bind ATP. Positions 1267 to 1444 (VRPVAINMRT…ILVTKKSEQS (178 aa)) constitute a FtsK 3 domain.

Whole protein oligomerizes in native gels. Part of the ESX / type VII secretion system (T7SS), which is composed of cytosolic and membrane components. The ESX membrane complex is composed of EccB, EccC and EccD.

The protein resides in the cell membrane. EsxB binding to the third FtsK domain causes multimerization; a subsequent unknown step relieves the allosteric inhibition of linker 2 on FtsK domain 1, activating the ATPase activity. Functionally, part of the ESX specialized secretion system, which exports proteins from the cell including EsxA (ESAT-6) and EsxB (CFP-10). Might be the translocase subunit. Probably only the first FtsK domain can hydrolyze ATP. The sequence is that of ESX secretion system protein EccC from Geobacillus thermodenitrificans (strain NG80-2).